The following is a 644-amino-acid chain: Exoribonuclease 2 (644 aa).

One can recognise an RNB domain in the interval 190–516; the sequence is REDLTALDFI…INHRLLKALI (327 aa). Residues 562-644 enclose the S1 motif domain; that stretch reads DSRFAAEIID…ENRSVIARPV (83 aa).

Belongs to the RNR ribonuclease family. RNase II subfamily.

It localises to the cytoplasm. The enzyme catalyses Exonucleolytic cleavage in the 3'- to 5'-direction to yield nucleoside 5'-phosphates.. In terms of biological role, involved in mRNA degradation. Hydrolyzes single-stranded polyribonucleotides processively in the 3' to 5' direction. The sequence is that of Exoribonuclease 2 from Sodalis glossinidius (strain morsitans).